The chain runs to 413 residues: Lamin tail domain-containing protein 1 (413 aa).

2 disordered regions span residues 1-25 and 102-128; these read MMKE…VQDG and HKDS…SDVD. Polar residues predominate over residues 107 to 128; sequence LGKQSTSSMVPRRQPQSSSDVD. Residues 169–287 enclose the LTD domain; it reads EVGQFTSSSL…EAIAWYTPIH (119 aa). The tract at residues 356 to 413 is disordered; that stretch reads LPNKSPWCRNPNTSPHPYSSLIDSHDSDISESSLDTQLKPQPTKPKPDPGTKKKKAKS. Residues 385–396 show a composition bias toward low complexity; the sequence is SESSLDTQLKPQ.

This sequence belongs to the intermediate filament family.

This chain is Lamin tail domain-containing protein 1 (Lmntd1), found in Mus musculus (Mouse).